A 448-amino-acid chain; its full sequence is Clusterin (448 aa).

A signal peptide spans Met-1–Gly-21. Positions Lys-77–Lys-80 match the Nuclear localization signal motif. Cystine bridges form between Cys-101–Cys-312, Cys-112–Cys-304, Cys-115–Cys-301, Cys-120–Cys-294, and Cys-128–Cys-284. A glycan (N-linked (GlcNAc...) asparagine) is linked at Asn-102. The residue at position 132 (Ser-132) is a Phosphoserine. N-linked (GlcNAc...) asparagine glycosylation is found at Asn-144, Asn-290, Asn-327, Asn-353, and Asn-373. Residue Ser-395 is modified to Phosphoserine. Positions Arg-442–Arg-446 match the Nuclear localization signal motif.

It belongs to the clusterin family. As to quaternary structure, antiparallel disulfide-linked heterodimer of an alpha chain and a beta chain. Self-associates and forms higher oligomers. Interacts with a broad range of misfolded proteins, including APP, APOC2 and LYZ. Slightly acidic pH promotes interaction with misfolded proteins. Forms high-molecular weight oligomers upon interaction with misfolded proteins. Interacts with APOA1, LRP2, CLUAP1 and PON1. Interacts with the complement membrane attack complex. Interacts (via alpha chain) with XRCC6. Interacts with SYVN1, COMMD1, BTRC, CUL1 and with ubiquitin and SCF (SKP1-CUL1-F-box protein) E3 ubiquitin-protein ligase complexes. Interacts (via alpha chain) with BAX in stressed cells, where BAX undergoes a conformation change leading to association with the mitochondrial membrane. Does not interact with BAX in unstressed cells. Found in a complex with LTF, CLU, EPPIN and SEMG1. Interacts (immaturely glycosylated pre-secreted form) with HSPA5; this interaction promotes CLU stability and facilitates stress-induced CLU retrotranslocation from the secretory pathway to the mitochondria, thereby reducing stress-induced apoptosis by stabilizing mitochondrial membrane integrity. Interacts with BCL2L1; this interaction releases and activates BAX and promotes cell death. Interacts with TGFBR2 and ACVR1. Interacts (secreted form) with STMN3; this interaction may act as an important modulator during neuronal differentiation. Interacts with VLDLR and LRP8. Proteolytically cleaved on its way through the secretory system, probably within the Golgi lumen. Proteolytic cleavage is not necessary for its chaperone activity. All non-secreted forms are not proteolytically cleaved. Chaperone activity of uncleaved forms is dependent on a non-reducing environment. In terms of processing, polyubiquitinated, leading to proteasomal degradation. Under cellular stress, the intracellular level of cleaved form is reduced due to proteasomal degradation. Post-translationally, extensively glycosylated with sulfated N-linked carbohydrates. About 30% of the protein mass is comprised of complex N-linked carbohydrate. Endoplasmic reticulum (ER) stress induces changes in glycosylation status and increases level of hypoglycosylated forms. Core carbohydrates are essential for chaperone activity. Non-secreted forms are hypoglycosylated or unglycosylated. In terms of tissue distribution, most abundant in stomach, liver, brain, and testis, with intermediate levels in heart, ovary and kidney.

It localises to the secreted. It is found in the nucleus. The protein localises to the cytoplasm. Its subcellular location is the mitochondrion membrane. The protein resides in the cytosol. It localises to the microsome. It is found in the endoplasmic reticulum. The protein localises to the mitochondrion. Its subcellular location is the perinuclear region. The protein resides in the cytoplasmic vesicle. It localises to the secretory vesicle. It is found in the chromaffin granule. Its function is as follows. Functions as extracellular chaperone that prevents aggregation of non native proteins. Prevents stress-induced aggregation of blood plasma proteins. Inhibits formation of amyloid fibrils by APP, APOC2, B2M, CALCA, CSN3, SNCA and aggregation-prone LYZ variants (in vitro). Does not require ATP. Maintains partially unfolded proteins in a state appropriate for subsequent refolding by other chaperones, such as HSPA8/HSC70. Does not refold proteins by itself. Binding to cell surface receptors triggers internalization of the chaperone-client complex and subsequent lysosomal or proteasomal degradation. When secreted, protects cells against apoptosis and against cytolysis by complement: inhibits assembly of the complement membrane attack complex (MAC) by preventing polymerization of C9 pore component of the MAC complex. Intracellular forms interact with ubiquitin and SCF (SKP1-CUL1-F-box protein) E3 ubiquitin-protein ligase complexes and promote the ubiquitination and subsequent proteasomal degradation of target proteins. Promotes proteasomal degradation of COMMD1 and IKBKB. Modulates NF-kappa-B transcriptional activity. Following stress, promotes apoptosis. Inhibits apoptosis when associated with the mitochondrial membrane by interference with BAX-dependent release of cytochrome c into the cytoplasm. Plays a role in the regulation of cell proliferation. Following ER stress, suppresses stress-induced apoptosis by stabilizing mitochondrial membrane integrity through interaction with HSPA5. When secreted, does not affect caspase or BAX-mediated intrinsic apoptosis and TNF-induced NF-kappa-B-activity. When secreted, acts as an important modulator during neuronal differentiation through interaction with STMN3. Plays a role in the clearance of immune complexes that arise during cell injury. The protein is Clusterin of Mus musculus (Mouse).